The following is a 768-amino-acid chain: Protein ITPRID2 (768 aa).

Disordered regions lie at residues 1-24 (MTTE…AEDS), 39-78 (LQAM…ESEE), and 98-124 (RKSG…CSPG). Polar residues-rich tracts occupy residues 39–57 (LQAM…TVTS) and 102–122 (SQDF…STCS). Ser-153, Ser-177, Ser-246, Ser-248, Ser-255, Ser-268, Ser-276, and Ser-312 each carry phosphoserine. The interval 315–338 (SVKKEEAPQSEAPRVEECHHGRTP) is disordered. The span at 316 to 334 (VKKEEAPQSEAPRVEECHH) shows a compositional bias: basic and acidic residues. Residue Lys-317 forms a Glycyl lysine isopeptide (Lys-Gly) (interchain with G-Cter in SUMO2) linkage. Phosphoserine occurs at positions 378 and 411. A coiled-coil region spans residues 468 to 546 (QELQVMRRSL…GLEEQLRAVR (79 aa)). Phosphoserine is present on residues Ser-549, Ser-564, Ser-569, Ser-572, Ser-627, and Ser-643. Disordered stretches follow at residues 605–647 (IPPG…VGKP) and 663–718 (ALTP…AAEE). The span at 610–627 (SSESVFSQATSESSSVCS) shows a compositional bias: polar residues. Position 665 is a phosphothreonine (Thr-665). A compositionally biased stretch (polar residues) spans 667-677 (TAPSRTGSVQT). Ser-670 is subject to Phosphoserine. Position 677 is a phosphothreonine (Thr-677). The segment covering 682-694 (ESSEEVDAAEEAP) has biased composition (acidic residues).

It localises to the cytoplasm. The protein is Protein ITPRID2 of Pongo abelii (Sumatran orangutan).